The chain runs to 742 residues: ATP-dependent RNA helicase DBP7 (742 aa).

Residues 45-100 (GKTVSRKRKANTTGDEGIIPGRGENSIKKLHKESSYSSEEQEKYKGRNAHNTQGRT) form a disordered region. The Q motif signature appears at 143–172 (DQFASLGVTSLLVSHLEQKMRIKKPTSIQK). Residues 178–372 (IIGNAGKNDF…NVALKDYKLI (195 aa)) form the Helicase ATP-binding domain. Residue 191-198 (AQTGSGKT) coordinates ATP. The short motif at 307–310 (DEGD) is the DEAD box element. Positions 405-605 (TLAATLNNIT…ILMPAFKDVN (201 aa)) constitute a Helicase C-terminal domain. Positions 701–726 (AMGLQSSKDGNSEKKPTKENSKNKMF) are disordered. A compositionally biased stretch (basic and acidic residues) spans 710 to 722 (GNSEKKPTKENSK).

The protein belongs to the DEAD box helicase family. DDX31/DBP7 subfamily.

It is found in the nucleus. The protein localises to the nucleolus. The catalysed reaction is ATP + H2O = ADP + phosphate + H(+). In terms of biological role, ATP-binding RNA helicase involved in the biogenesis of 60S ribosomal subunits and is required for the normal formation of 25S and 5.8S rRNAs. The protein is ATP-dependent RNA helicase DBP7 (DBP7) of Saccharomyces cerevisiae (strain YJM789) (Baker's yeast).